Reading from the N-terminus, the 213-residue chain is NAD(P)H-hydrate epimerase (213 aa).

The 203-residue stretch at 8-210 (MYNIEENGHA…KIGIPPEAEK (203 aa)) folds into the YjeF N-terminal domain. 55–59 (NNGGD) contacts (6S)-NADPHX. The K(+) site is built by asparagine 56 and aspartate 122. (6S)-NADPHX is bound by residues 126–132 (GTGITGE), tyrosine 137, and aspartate 155. Residue serine 158 participates in K(+) binding.

It belongs to the NnrE/AIBP family. The cofactor is K(+).

The enzyme catalyses (6R)-NADHX = (6S)-NADHX. It carries out the reaction (6R)-NADPHX = (6S)-NADPHX. Catalyzes the epimerization of the S- and R-forms of NAD(P)HX, a damaged form of NAD(P)H that is a result of enzymatic or heat-dependent hydration. This is a prerequisite for the S-specific NAD(P)H-hydrate dehydratase to allow the repair of both epimers of NAD(P)HX. The chain is NAD(P)H-hydrate epimerase from Cenarchaeum symbiosum (strain A).